The following is a 100-amino-acid chain: NADH-quinone oxidoreductase subunit K (100 aa).

3 helical membrane passes run 4–24, 29–49, and 60–80; these read TSYY…GVLL, IVVF…LVAF, and VIVF…LALL.

The protein belongs to the complex I subunit 4L family. As to quaternary structure, NDH-1 is composed of 14 different subunits. Subunits NuoA, H, J, K, L, M, N constitute the membrane sector of the complex.

The protein localises to the cell membrane. It carries out the reaction a quinone + NADH + 5 H(+)(in) = a quinol + NAD(+) + 4 H(+)(out). In terms of biological role, NDH-1 shuttles electrons from NADH, via FMN and iron-sulfur (Fe-S) centers, to quinones in the respiratory chain. The immediate electron acceptor for the enzyme in this species is believed to be ubiquinone. Couples the redox reaction to proton translocation (for every two electrons transferred, four hydrogen ions are translocated across the cytoplasmic membrane), and thus conserves the redox energy in a proton gradient. The chain is NADH-quinone oxidoreductase subunit K from Chloroflexus aurantiacus (strain ATCC 29366 / DSM 635 / J-10-fl).